A 378-amino-acid polypeptide reads, in one-letter code: L-asparaginase-like protein GF11609 (378 aa).

Residues 1 to 21 form the signal peptide; it reads MCSPLPLLILRLLLLTHPSLG. Disulfide bonds link cysteine 71-cysteine 76, cysteine 170-cysteine 186, and cysteine 325-cysteine 352.

The protein belongs to the Ntn-hydrolase family.

This is L-asparaginase-like protein GF11609 from Drosophila ananassae (Fruit fly).